The primary structure comprises 377 residues: Caspase-4 (377 aa).

Residues 1-59 (MAEGNHRKKPLKVLESLGKDFLTGVLDNLVEQNVLNWKEEEKKKYYDAKTEDKVRVMAD) are required for LPS-binding. Residues 1–80 (MAEGNHRKKP…MLLQTFFNID (80 aa)) constitute a propeptide that is removed on maturation. The 91-residue stretch at 1–91 (MAEGNHRKKP…ISPNKKAHPN (91 aa)) folds into the CARD domain. A2 is subject to N-acetylalanine. Residue S83 is modified to Phosphoserine. The disordered stretch occupies residues 84 to 104 (PNKKAHPNMEAGPPESGESTD). Catalysis depends on residues H210 and C258. Residues 271–289 (SPASLEVASSQSSENLEED) constitute a propeptide that is removed on maturation. R314 carries the post-translational modification (Microbial infection) ADP-riboxanated arginine.

Belongs to the peptidase C14A family. In terms of assembly, heterotetramer that consists of two anti-parallel arranged heterodimers, each one formed by a 20 kDa (Caspase-4 subunit p20) and a 10 kDa (Caspase-4 subunit p10) subunit. Upon direct LPS-binding, forms large homooligomers, resulting in its activation. These oligomers are often referred to as 'non-canonical inflammasomes'. In its precursor form, interacts with TMEM214; this interaction is required for association with the endoplasmic reticulum membrane. Interacts with CASP1. Interacts with NOD2. Interacts with SERPINB1; this interaction regulates CASP4 activity. As to quaternary structure, heterotetramer that consists of two anti-parallel arranged heterodimers, each one formed by a 20 kDa (Caspase-4 subunit p20) and a 10 kDa (Caspase-4 subunit p10) subunit. (Microbial infection) Interacts with NleF protein from pathogenic E.coli; this interaction leads to enzyme inhibition. In terms of assembly, (Microbial infection) Interacts with cathepsin CTSG; the interaction is promoted by the Td92 surface protein of the periodontal pathogen T.denticola and leads to CASP4 activation. Post-translationally, in response to activation signals, undergoes autoproteolytic cleavage and activation. (Microbial infection) ADP-riboxanation by S.flexneri OspC3 blocks CASP4 autoprocessing, preventing CASP4 activation and ability to recognize and cleave GSDMD, thereby thwarting the inflammasome/pyroptosis-mediated defense. Widely expressed, including in keratinocytes and colonic and small intestinal epithelial cells (at protein level). Not detected in brain.

The protein localises to the cytoplasm. It is found in the cytosol. It localises to the endoplasmic reticulum membrane. Its subcellular location is the mitochondrion. The protein resides in the inflammasome. The protein localises to the secreted. The catalysed reaction is Strict requirement for Asp at the P1 position. It has a preferred cleavage sequence of Tyr-Val-Ala-Asp-|- but also cleaves at Asp-Glu-Val-Asp-|-.. Its activity is regulated as follows. Activated by homooligomerization induced by direct binding to cytosolic LPS, in a TLR4-independent manner. In addition to LPS, CASP4/CASP11 may also be activated by oxidized phospholipid 1-palmitoyl-2-arachidonoyl- sn-glycero-3-phosphorylcholine, an oxidized phospholipid (oxPAPC), in dendritic cells, promoting adaptive immunity. The role of oxPAPC is however unclear and another report suggests that oxPAPC competes with LPS-binding and inhibits the non-canonical inflammasome in macrophages. In terms of biological role, inflammatory caspase that acts as the effector of the non-canonical inflammasome by mediating lipopolysaccharide (LPS)-induced pyroptosis. Also indirectly activates the NLRP3 and NLRP6 inflammasomes. Acts as a thiol protease that cleaves a tetrapeptide after an Asp residue at position P1: catalyzes cleavage of CGAS, GSDMD and IL18. Effector of the non-canonical inflammasome independently of NLRP3 inflammasome and CASP1: the non-canonical inflammasome promotes pyroptosis through GSDMD cleavage without involving secretion of cytokine IL1B. In the non-canonical inflammasome, CASP4 is activated by direct binding to the lipid A moiety of LPS without the need of an upstream sensor. LPS-binding promotes CASP4 activation and CASP4-mediated cleavage of GSDMD and IL18, followed by IL18 secretion through the GSDMD pore, pyroptosis of infected cells and their extrusion into the gut lumen. Also indirectly promotes secretion of mature cytokines (IL1A and HMGB1) downstream of GSDMD-mediated pyroptosis via activation of the NLRP3 and NLRP6 inflammasomes. Involved in NLRP3-dependent CASP1 activation and IL1B secretion in response to non-canonical activators, such as UVB radiation or cholera enterotoxin. Involved in NLRP6 inflammasome-dependent activation in response to lipoteichoic acid (LTA), a cell-wall component of Gram-positive bacteria, which leads to CASP1 activation and IL1B secretion. Involved in LPS-induced IL6 secretion; this activity may not require caspase enzymatic activity. The non-canonical inflammasome is required for innate immunity to cytosolic, but not vacuolar, bacteria. Plays a crucial role in the restriction of S.typhimurium replication in colonic epithelial cells during infection. Activation of the non-canonical inflammasome in brain endothelial cells can lead to excessive pyroptosis, leading to blood-brain barrier breakdown. Pyroptosis limits bacterial replication, while cytokine secretion promotes the recruitment and activation of immune cells and triggers mucosal inflammation. May also act as an activator of adaptive immunity in dendritic cells, following activation by oxidized phospholipid 1-palmitoyl-2-arachidonoyl- sn-glycero-3-phosphorylcholine, an oxidized phospholipid (oxPAPC). Involved in cell death induced by endoplasmic reticulum stress and by treatment with cytotoxic APP peptides found in Alzheimer's patient brains. Cleavage of GSDMD is not strictly dependent on the consensus cleavage site but depends on an exosite interface on CASP4 that recognizes and binds the Gasdermin-D, C-terminal (GSDMD-CT) part. Catalyzes cleavage and maturation of IL18; IL18 processing also depends of the exosite interface on CASP4. In contrast, it does not directly process IL1B. During non-canonical inflammasome activation, cuts CGAS and may play a role in the regulation of antiviral innate immune activation. Functionally, (Microbial infection) In response to the Td92 surface protein of the periodontal pathogen T.denticola, activated by cathepsin CTSG which leads to production and secretion of IL1A and pyroptosis of gingival fibroblasts. The protein is Caspase-4 of Homo sapiens (Human).